Consider the following 705-residue polypeptide: Forkhead box protein P1 (705 aa).

A compositionally biased stretch (polar residues) spans 1-19 (MMQESGSETKSNGSAIQNG). The disordered stretch occupies residues 1 to 41 (MMQESGSETKSNGSAIQNGSSGGNHLLECGALRDTRSNGEA). Serine 113 bears the Phosphoserine mark. Disordered stretches follow at residues 267–286 (HTAE…TSTC) and 291–326 (APSK…EHPH). 2 stretches are compositionally biased toward polar residues: residues 276–286 (NHSSLDLTSTC) and 291–311 (APSK…QLSV). Over residues 314-326 (PKRESLSHEEHPH) the composition is skewed to basic and acidic residues. Lysine 315 is covalently cross-linked (Glycyl lysine isopeptide (Lys-Gly) (interchain with G-Cter in SUMO2)). The segment at 334-359 (GVCKWPGCEAVCDDFPAFLKHLNSEH) adopts a C2H2-type zinc-finger fold. The tract at residues 376–397 (VQQLELQLAKDKERLQAMMTHL) is leucine-zipper. Glycyl lysine isopeptide (Lys-Gly) (interchain with G-Cter in SUMO2) cross-links involve residues lysine 400 and lysine 405. The interval 410–414 (PLNLV) is CTBP1-binding. Polar residues predominate over residues 418–431 (TLSKSASEASPQSL). The disordered stretch occupies residues 418-450 (TLSKSASEASPQSLPHTPTTPTAPLTPVTQGPS). Low complexity predominate over residues 432-446 (PHTPTTPTAPLTPVT). A Glycyl lysine isopeptide (Lys-Gly) (interchain with G-Cter in SUMO2) cross-link involves residue lysine 470. Positions 493 to 583 (RPPFTYASLI…PQKISGNPSL (91 aa)) form a DNA-binding region, fork-head. The disordered stretch occupies residues 639 to 705 (EHTNSNESDS…EDEPVNEDME (67 aa)). A compositionally biased stretch (polar residues) spans 640–651 (HTNSNESDSSPG). A Phosphothreonine modification is found at threonine 681. At serine 686 the chain carries Phosphoserine. The segment covering 695–705 (YEDEPVNEDME) has biased composition (acidic residues).

Forms homodimers and heterodimers with FOXP2 and FOXP4. Dimerization is required for DNA-binding. Self-associates. Interacts with CTBP1. Interacts with NCOR2 and AR. Interacts with FOXP2. Interacts with TBR1. Interacts with AURKA; this interaction facilitates the phosphorylation of FOXP1, which suppresses the expression of FBXL7. Interacts with ZMYM2. In terms of tissue distribution, isoform 5 is specifically expressed in embryonic stem cells. Highest expression in the lung, brain, and spleen. Lower expression in heart, skeletal muscle, kidney, small intestine (isoform 3 not present) and liver.

The protein localises to the nucleus. Functionally, transcriptional repressor. Can act with CTBP1 to synergistically repress transcription but CTPBP1 is not essential. Plays an important role in the specification and differentiation of lung epithelium. Acts cooperatively with FOXP4 to regulate lung secretory epithelial cell fate and regeneration by restricting the goblet cell lineage program; the function may involve regulation of AGR2. Essential transcriptional regulator of B-cell development. Involved in regulation of cardiac muscle cell proliferation. Involved in the columnar organization of spinal motor neurons. Promotes the formation of the lateral motor neuron column (LMC) and the preganglionic motor column (PGC) and is required for respective appropriate motor axon projections. The segment-appropriate generation of spinal cord motor columns requires cooperation with other Hox proteins. Can regulate PITX3 promoter activity; may promote midbrain identity in embryonic stem cell-derived dopamine neurons by regulating PITX3. Negatively regulates the differentiation of T follicular helper cells T(FH)s. Involved in maintenance of hair follicle stem cell quiescence; the function probably involves regulation of FGF18. Represses transcription of various pro-apoptotic genes and cooperates with NF-kappa B-signaling in promoting B-cell expansion by inhibition of caspase-dependent apoptosis. Binds to CSF1R promoter elements and is involved in regulation of monocyte differentiation and macrophage functions; repression of CSF1R in monocytes seems to involve NCOR2 as corepressor. Involved in endothelial cell proliferation, tube formation and migration indicative for a role in angiogenesis; the role in neovascularization seems to implicate suppression of SEMA5B. Can negatively regulate androgen receptor signaling. Acts as a transcriptional activator of the FBXL7 promoter; this activity is regulated by AURKA. Involved in transcriptional regulation in embryonic stem cells (ESCs). Stimulates expression of transcription factors that are required for pluripotency and decreases expression of differentiation-associated genes. Has distinct DNA-binding specifities as compared to the canonical form and preferentially binds DNA with the sequence 5'-CGATACAA-3' (or closely related sequences). Promotes ESC self-renewal and pluripotency. The sequence is that of Forkhead box protein P1 (Foxp1) from Mus musculus (Mouse).